We begin with the raw amino-acid sequence, 206 residues long: Protein FAM228A (206 aa).

The protein belongs to the FAM228 family.

In Homo sapiens (Human), this protein is Protein FAM228A (FAM228A).